Here is a 229-residue protein sequence, read N- to C-terminus: UPF0758 protein MM_2791 (229 aa).

An MPN domain is found at 106 to 228 (KISSPKDVYT…YVSLKDEGFV (123 aa)). Residues H177, H179, and D190 each coordinate Zn(2+). The JAMM motif signature appears at 177-190 (HNHPSGDPSPSRED).

The protein belongs to the UPF0758 family.

This chain is UPF0758 protein MM_2791, found in Methanosarcina mazei (strain ATCC BAA-159 / DSM 3647 / Goe1 / Go1 / JCM 11833 / OCM 88) (Methanosarcina frisia).